Reading from the N-terminus, the 393-residue chain is S-adenosylmethionine synthase 2 (393 aa).

Glutamate 9 contributes to the Mg(2+) binding site. Histidine 15 is an ATP binding site. Glutamate 43 provides a ligand contact to K(+). 2 residues coordinate L-methionine: glutamate 56 and glutamine 99. ATP contacts are provided by residues aspartate 167–lysine 169, serine 235–phenylalanine 238, aspartate 246, arginine 252–lysine 253, alanine 269, lysine 273, and lysine 277. L-methionine is bound at residue aspartate 246. Position 277 (lysine 277) interacts with L-methionine.

This sequence belongs to the AdoMet synthase family. As to quaternary structure, homotetramer. Requires Mn(2+) as cofactor. The cofactor is Mg(2+). Co(2+) serves as cofactor. K(+) is required as a cofactor.

The protein resides in the cytoplasm. It carries out the reaction L-methionine + ATP + H2O = S-adenosyl-L-methionine + phosphate + diphosphate. The protein operates within amino-acid biosynthesis; S-adenosyl-L-methionine biosynthesis; S-adenosyl-L-methionine from L-methionine: step 1/1. In terms of biological role, catalyzes the formation of S-adenosylmethionine from methionine and ATP. The reaction comprises two steps that are both catalyzed by the same enzyme: formation of S-adenosylmethionine (AdoMet) and triphosphate, and subsequent hydrolysis of the triphosphate. May be involved in the synthesis of betain in response to abiotic stress such as high salinity. This chain is S-adenosylmethionine synthase 2 (SAMS2), found in Beta vulgaris (Sugar beet).